Consider the following 115-residue polypeptide: Protachykinin-1 (115 aa).

Residues 1–19 (MKILVALAVLALVSTQLFA) form the signal peptide. A propeptide spanning residues 20–56 (EDIRANDDLNYWSDWSDSDQIKEELPEPFEHLLQRIA) is cleaved from the precursor. Methionine 68 and methionine 92 each carry methionine amide.

It belongs to the tachykinin family. Post-translationally, the substance P form is cleaved at Pro-59 by the prolyl endopeptidase FAP (seprase) activity (in vitro). Substance P is also cleaved and degraded by Angiotensin-converting enzyme (ACE) and neprilysin (MME).

Its subcellular location is the secreted. Its function is as follows. Tachykinins are active peptides which excite neurons, evoke behavioral responses, are potent vasodilators and secretagogues, and contract (directly or indirectly) many smooth muscles. This Oryctolagus cuniculus (Rabbit) protein is Protachykinin-1 (TAC1).